A 1347-amino-acid chain; its full sequence is Protein HUA2-LIKE 3 (1347 aa).

Residues 24–81 (VGDLVLAKVKGFPAWPAVVDEPEKWGHSADSKKVTVHFFGTQQIAFCNHGDVESFTEE) form the PWWP domain. Disordered regions lie at residues 110–137 (KLKQQDQASGPKYAEETTAGSSGNTSQL), 251–320 (DGGP…SGSK), and 383–402 (DSCQRSQNSHERLNERPCEE). Over residues 127-137 (TAGSSGNTSQL) the composition is skewed to polar residues. Positions 302 to 314 (VESNNNSRNEGNG) are enriched in low complexity. Residues 390 to 402 (NSHERLNERPCEE) show a composition bias toward basic and acidic residues. The CID domain occupies 845 to 986 (DVQCTVESFE…HHIRELDSLS (142 aa)). 4 disordered regions span residues 1037–1069 (RDEDEGSDSDGGDFESVTPEHESRSLEEHVTPS), 1121–1140 (TSHQNVTSSSPPARPSQNAQ), 1147–1223 (YSNG…YSYM), and 1259–1347 (RMRP…WHQR). The segment covering 1038-1049 (DEDEGSDSDGGD) has biased composition (acidic residues). Residues 1054–1069 (TPEHESRSLEEHVTPS) are compositionally biased toward basic and acidic residues. Polar residues predominate over residues 1181–1191 (PSYSSRVSLSK). Residues 1208–1217 (SSHPPPPPPS) show a composition bias toward pro residues. The segment covering 1259-1272 (RMRPEPCENRDNWR) has biased composition (basic and acidic residues).

In terms of tissue distribution, expressed throughout young primordia, and vegetative and reproductive apices.

Its subcellular location is the nucleus. Probable transcription factor that acts with partial redundancy with HULK1 and HULK2. Plays diverse and essential roles in the control of plant development, physiology and flowering time. In Arabidopsis thaliana (Mouse-ear cress), this protein is Protein HUA2-LIKE 3.